The sequence spans 520 residues: Laccase-2 (520 aa).

Residues 1 to 19 (MRFSNAFVLVAACISSVLA) form the signal peptide. 3 consecutive Plastocyanin-like domains span residues 21 to 145 (TKTF…FVVY), 157 to 305 (VDDE…LTLA), and 375 to 488 (TVPV…FAEA). Residues H82 and H84 each contribute to the Cu cation site. Cystine bridges form between C103-C509 and C135-C229. A glycan (N-linked (GlcNAc...) asparagine) is linked at N108. Residues H127 and H129 each contribute to the Cu cation site. 2 N-linked (GlcNAc...) asparagine glycosylation sites follow: N241 and N299. Cu cation contacts are provided by H417, H420, H422, H470, C471, H472, and H476. The N-linked (GlcNAc...) asparagine glycan is linked to N492.

Belongs to the multicopper oxidase family. Cu cation serves as cofactor.

Its subcellular location is the secreted. It carries out the reaction 4 hydroquinone + O2 = 4 benzosemiquinone + 2 H2O. Functionally, lignin degradation and detoxification of lignin-derived products. The protein is Laccase-2 (lcc2) of Agaricus bisporus (White button mushroom).